The primary structure comprises 222 residues: Dihydrophenazinedicarboxylate synthase (222 aa).

Ser-18 contacts substrate. FMN is bound by residues 73–76 (RIVV) and 88–89 (ST). His-90 serves as a coordination point for substrate. FMN contacts are provided by residues 94 to 95 (QK) and Gln-117. Substrate-binding residues include Arg-139 and Ser-147. FMN-binding positions include 152–153 (QS) and Arg-205.

Belongs to the pyridoxamine 5'-phosphate oxidase family. FMN is required as a cofactor.

The enzyme catalyses (1R,6R)-1,4,5,5a,6,9-hexahydrophenazine-1,6-dicarboxylate + O2 = (1R,10aS)-1,4,10,10a-tetrahydrophenazine-1,6-dicarboxylate + H2O2. It catalyses the reaction (1R,10aS)-1,4,10,10a-tetrahydrophenazine-1,6-dicarboxylate + O2 = (5aS)-5,5a-dihydrophenazine-1,6-dicarboxylate + H2O2. The catalysed reaction is (1R,10aS)-1,4,10,10a-tetrahydrophenazine-1-carboxylate + O2 = (10aS)-10,10a-dihydrophenazine-1-carboxylate + H2O2. It carries out the reaction (1R)-1,4,5,10-tetrahydrophenazine-1-carboxylate + O2 = (10aS)-10,10a-dihydrophenazine-1-carboxylate + H2O2. It participates in antibiotic biosynthesis; phenazine biosynthesis. Its function is as follows. Involved in the biosynthesis of the antibiotic phenazine, a nitrogen-containing heterocyclic molecule having important roles in virulence, competition and biological control. Catalyzes several oxidations in the terminal steps of core phenazine biosynthesis. It oxidizes both hexahydrophenazine-1,6-dicarboxylic acid (HHPDC) and tetrahydrophenazine-1-carboxylic acid (THPCA) and thereby contributes to the generation of both phenazine-1,6-dicarboxylic acid (PDC) and phenazine-1-carboxylic acid (PCA). This is Dihydrophenazinedicarboxylate synthase from Pseudomonas chlororaphis (Pseudomonas aureofaciens).